Consider the following 303-residue polypeptide: Ribosomal RNA small subunit methyltransferase H (303 aa).

Residues 32-34 (GGH), aspartate 52, phenylalanine 78, aspartate 99, and glutamine 106 contribute to the S-adenosyl-L-methionine site.

The protein belongs to the methyltransferase superfamily. RsmH family.

Its subcellular location is the cytoplasm. The enzyme catalyses cytidine(1402) in 16S rRNA + S-adenosyl-L-methionine = N(4)-methylcytidine(1402) in 16S rRNA + S-adenosyl-L-homocysteine + H(+). Specifically methylates the N4 position of cytidine in position 1402 (C1402) of 16S rRNA. This is Ribosomal RNA small subunit methyltransferase H from Acinetobacter baylyi (strain ATCC 33305 / BD413 / ADP1).